We begin with the raw amino-acid sequence, 48 residues long: ATP synthase protein 8 (48 aa).

Residues Leu13–Ile35 traverse the membrane as a helical segment.

The protein belongs to the ATPase protein 8 family. As to quaternary structure, F-type ATPases have 2 components, CF(1) - the catalytic core - and CF(0) - the membrane proton channel. In yeast, the dimeric form of ATP synthase consists of 18 polypeptides: alpha, beta, gamma, delta, epsilon, 4 (B), 5 (OSCP), 6 (A), 8, 9 (C), d, E (Tim11), f, g, h, i, j and k.

The protein localises to the mitochondrion membrane. Functionally, mitochondrial membrane ATP synthase (F(1)F(0) ATP synthase or Complex V) produces ATP from ADP in the presence of a proton gradient across the membrane which is generated by electron transport complexes of the respiratory chain. F-type ATPases consist of two structural domains, F(1) - containing the extramembraneous catalytic core and F(0) - containing the membrane proton channel, linked together by a central stalk and a peripheral stalk. During catalysis, ATP synthesis in the catalytic domain of F(1) is coupled via a rotary mechanism of the central stalk subunits to proton translocation. Part of the complex F(0) domain. Minor subunit located with subunit a in the membrane. The sequence is that of ATP synthase protein 8 (ATP8) from Eremothecium gossypii (strain ATCC 10895 / CBS 109.51 / FGSC 9923 / NRRL Y-1056) (Yeast).